We begin with the raw amino-acid sequence, 81 residues long: Dermaseptin-B2 (81 aa).

A signal peptide spans 1-22 (MAFLKKSLFLVLFLGLVSLSIC). Residues 23–43 (EEEKRENEDEEEQEDDEQSEM) constitute a propeptide that is removed on maturation. Residues 24-46 (EEKRENEDEEEQEDDEQSEMKRG) form a disordered region. A compositionally biased stretch (acidic residues) spans 30–40 (EDEEEQEDDEQ). Residues 54 to 55 (VG) are hinge region that separates the two alpha-helices that constitute the peptide. Val78 bears the Valine amide mark. Residues 80-81 (EQ) constitute a propeptide that is removed on maturation.

Post-translationally, amidation permits an increased antimicrobial activity against some microorganisms such as T.album and S.cerevisiae. May contain a D-amino acid residue, since the natural peptide is not identical in chromatographic properties to the synthetic peptide. Expressed by the skin glands.

It is found in the secreted. The protein resides in the target cell membrane. Cationic amphipathic alpha-helical antimicrobial peptide with potent activity against Gram-negative and Gram-positive bacteria, fungi and protozoa. Acts in a synergistic effect in combination with Plasticin-B1 at doses that are not active alone. Acts by disturbing membrane functions. On model membranes, induces a strong perturbation of anionic lipid bilayers, resides at the hydrocarbon core-water interface, parallel to the plane of the membrane, and interacts preferentially with the polar head groups and glycerol backbone region of the anionic phospholipids, as well as the region of the lipid acyl chain near the bilayer surface. Induces a positive curvature of the bilayer and clustering of anionic lipids, consistent with a carpet mechanism, that may lead to the formation of mixed peptide-phospholipid toroidal, transient pores and membrane permeation/disruption once a threshold peptide accumulation is reached. Also enhances binding of agonists to adenosine A1 receptors (ADORA1), adenosine A2a receptors (ADORA2A), alpha-2 adrenergic receptors (ADRA2A) and 5-hydroxytryptamine 1A receptors (HTR1A). In addition, it enhances guanyl nucleotide exchange which may result in the conversion of receptors to a high affinity state complexed with guanyl nucleotide free G-protein. Affects human behavior eliciting profound malaise, followed by listlessness and then euphoria. Does not show cytotoxic activity on CHO cells. Does not act as a chemoattractant. Does not show hemolytic activity. The protein is Dermaseptin-B2 (ADR) of Phyllomedusa bicolor (Two-colored leaf frog).